A 453-amino-acid polypeptide reads, in one-letter code: MELLKLNRSAQGSGAGPGASLCRAGGALLNSSGAGNLSCEPPRLRGAGTRELELAIRVTLYAVIFLMSVGGNVLIIVVLGLSRRLRTVTNAFLLSLAVSDLLLAVACMPFTLLPNLMGTFIFGTVVCKAVSYLMGVSVSVSTLSLVAIALERYSAICRPLQARVWQTRSHAARVIIATWMLSGLLMVPYPVYTAVQPAGGARALQCVHRWPSARVRQTWSVLLLLLLFFVPGVVMAVAYGLISRELYLGLRFDEDSDSESRVRSQGGLRGGAGPGPAPPNGSCRPEGGLAGEDGDGCYVQLPRSRQTLELSALTAPTPGPGGGPRPYQAKLLAKKRVVRMLLVIVVLFFLCWLPLYSANTWRAFDSSGAHRALSGAPISFIHLLSYASACVNPLVYCFMHRRFRQACLETCARCCPRPPRARPRPLPDEDPPTPSIASLSRLSYTTISTLGPG.

At 1–57 (MELLKLNRSAQGSGAGPGASLCRAGGALLNSSGAGNLSCEPPRLRGAGTRELELAIR) the chain is on the extracellular side. Residues asparagine 7, asparagine 30, and asparagine 36 are each glycosylated (N-linked (GlcNAc...) asparagine). The helical transmembrane segment at 58–79 (VTLYAVIFLMSVGGNVLIIVVL) threads the bilayer. The Cytoplasmic segment spans residues 80–87 (GLSRRLRT). The helical transmembrane segment at 88–109 (VTNAFLLSLAVSDLLLAVACMP) threads the bilayer. Over 110-131 (FTLLPNLMGTFIFGTVVCKAVS) the chain is Extracellular. A disulfide bridge connects residues cysteine 127 and cysteine 206. Residues 132–150 (YLMGVSVSVSTLSLVAIAL) form a helical membrane-spanning segment. The Cytoplasmic segment spans residues 151 to 170 (ERYSAICRPLQARVWQTRSH). A helical membrane pass occupies residues 171–189 (AARVIIATWMLSGLLMVPY). Residues 190–220 (PVYTAVQPAGGARALQCVHRWPSARVRQTWS) are Extracellular-facing. The chain crosses the membrane as a helical span at residues 221-243 (VLLLLLLFFVPGVVMAVAYGLIS). Residues 244 to 339 (RELYLGLRFD…KLLAKKRVVR (96 aa)) are Cytoplasmic-facing. The tract at residues 258 to 286 (SESRVRSQGGLRGGAGPGPAPPNGSCRPE) is disordered. A helical transmembrane segment spans residues 340–361 (MLLVIVVLFFLCWLPLYSANTW). Residues 362–379 (RAFDSSGAHRALSGAPIS) lie on the Extracellular side of the membrane. The helical transmembrane segment at 380–400 (FIHLLSYASACVNPLVYCFMH) threads the bilayer. Topologically, residues 401–453 (RRFRQACLETCARCCPRPPRARPRPLPDEDPPTPSIASLSRLSYTTISTLGPG) are cytoplasmic. Cysteine 414 carries S-palmitoyl cysteine lipidation. Residues 422 to 453 (RPRPLPDEDPPTPSIASLSRLSYTTISTLGPG) are disordered. The segment covering 435–453 (SIASLSRLSYTTISTLGPG) has biased composition (polar residues).

The protein belongs to the G-protein coupled receptor 1 family. In terms of tissue distribution, parietal cells, pancreas, brain and various neoplastic tissues.

It localises to the cell membrane. Functionally, receptor for gastrin and cholecystokinin. The CCK-B receptors occur throughout the central nervous system where they modulate anxiety, analgesia, arousal, and neuroleptic activity. This receptor mediates its action by association with G proteins that activate a phosphatidylinositol-calcium second messenger system. The protein is Gastrin/cholecystokinin type B receptor (CCKBR) of Canis lupus familiaris (Dog).